The primary structure comprises 363 residues: Serpentine receptor class beta-17 (363 aa).

A run of 7 helical transmembrane segments spans residues 46–66 (AFLLVKLYHILLSVISMGSII), 75–95 (LLAFHFNIKILFFFQFCSCFL), 120–140 (VILAPALFALFNLPLIFSMLC), 169–189 (IGFVLTSFAVIVPGLTCLYMY), 214–234 (YIFITINVLNVLTLMHSIGLY), 273–293 (CAQLIIFLLYGCAMYSLRIFL), and 304–324 (VTEFCYTPPLYCAIMPLICIV).

It belongs to the nematode receptor-like protein srb family.

The protein resides in the membrane. In Caenorhabditis elegans, this protein is Serpentine receptor class beta-17 (srb-17).